Here is a 65-residue protein sequence, read N- to C-terminus: Hirudin-3A' (65 aa).

The interaction with thrombin active site stretch occupies residues 1-3; the sequence is VVY. 3 cysteine pairs are disulfide-bonded: Cys-6-Cys-14, Cys-16-Cys-28, and Cys-22-Cys-39. Residues 32–65 are disordered; it reads SDGEKNECVTGEGTPKPQSHNDGDFEEIPEEYLQ. Residue Thr-45 is glycosylated (O-linked (GalNAc...) threonine). The interval 55-65 is interaction with fibrinogen-binding exosite of thrombin; sequence DFEEIPEEYLQ. Positions 55–65 are enriched in acidic residues; the sequence is DFEEIPEEYLQ. Position 63 is a sulfotyrosine (Tyr-63).

This sequence belongs to the protease inhibitor I14 (hirudin) family.

Its subcellular location is the secreted. Functionally, hirudin is a potent thrombin-specific protease inhibitor. It forms a stable non-covalent complex with alpha-thrombin, thereby abolishing its ability to cleave fibrinogen. The polypeptide is Hirudin-3A' (Hirudo medicinalis (Medicinal leech)).